Here is a 555-residue protein sequence, read N- to C-terminus: MPYPANVREIRAPRGTTLNTQSWLTEAPLRMLMNNLDPDVAERPEDLVVYGGIGRAARNWEAFDAIVAALKRLKEDETLLIQSGKPVGVFRTHADAPRVLLANSNLVPRWANWDHFNELDRKGLMMYGQMTAGSWIYIGAQGIVQGTYETFVEMGRQHHGGNLKGKWLLTAGLGGMGGAQPLASVMAGTACLAIECQPSSIEMRMRTGYLDAWTDDLEKALAMIDESCASGTPKSVGLLGNACEILPKILELGRLPDLLTDQTSAHDPVNGYLPEDWNVEDWKARRLSDPKAVEKAARASMAKHVRAMLEFQRRGVPTVDYGNNIRQVALDEGVADAFDFPGFVPAYIRPLFCRGIGPFRWAALSGDPEDIYRTDQKVKELIPDNPHLHTWLDMARERIKFQGLPARICWVGLGDRHRLGLAFNEMVASGELKAPVVIGRDHLDSGSVASPNRETEAMRDGSDAVSDWPLLNALLNCASGATWVSLHHGGGVGMGYSQHAGMVICCDGTEAAARRIERVLWNDPASGVMRHADAGYDIAIDSAREHGLDLPSLKG.

NAD(+) contacts are provided by residues 51-52 (GG), glutamine 129, 175-177 (GMG), glutamate 195, 241-242 (NA), 262-266 (QTSAH), 272-273 (YL), and tyrosine 321. Residue cysteine 409 is part of the active site. Residue glycine 491 coordinates NAD(+).

It belongs to the urocanase family. It depends on NAD(+) as a cofactor.

It localises to the cytoplasm. It carries out the reaction 4-imidazolone-5-propanoate = trans-urocanate + H2O. Its pathway is amino-acid degradation; L-histidine degradation into L-glutamate; N-formimidoyl-L-glutamate from L-histidine: step 2/3. In terms of biological role, catalyzes the conversion of urocanate to 4-imidazolone-5-propionate. This Hyphomonas neptunium (strain ATCC 15444) protein is Urocanate hydratase.